Consider the following 245-residue polypeptide: tRNA (guanine-N(1)-)-methyltransferase (245 aa).

S-adenosyl-L-methionine is bound by residues Gly111 and 131–136 (IGDYVL).

It belongs to the RNA methyltransferase TrmD family. As to quaternary structure, homodimer.

Its subcellular location is the cytoplasm. The catalysed reaction is guanosine(37) in tRNA + S-adenosyl-L-methionine = N(1)-methylguanosine(37) in tRNA + S-adenosyl-L-homocysteine + H(+). Its function is as follows. Specifically methylates guanosine-37 in various tRNAs. This is tRNA (guanine-N(1)-)-methyltransferase from Staphylococcus haemolyticus (strain JCSC1435).